The chain runs to 182 residues: UPF0690 protein C1orf52 homolog (182 aa).

The interval 1-61 (MAAEEKDPLS…AEKRLPGPDE (61 aa)) is disordered. Residues 23–32 (SDEEDNSEPE) are compositionally biased toward acidic residues. Basic and acidic residues predominate over residues 51–61 (KAEKRLPGPDE). Thr67 is modified (phosphothreonine). Tyr132 carries the post-translational modification Phosphotyrosine. The interval 132 to 182 (YEDNGDDAPQNAKKARLLPEGEETVESDDEKDEHTSKKRKIELGEPTKKKK) is disordered. A compositionally biased stretch (acidic residues) spans 151–162 (EGEETVESDDEK). At Ser158 the chain carries Phosphoserine. Residues 172–182 (IELGEPTKKKK) show a composition bias toward basic and acidic residues.

Belongs to the UPF0690 family.

This chain is UPF0690 protein C1orf52 homolog, found in Bos taurus (Bovine).